The chain runs to 150 residues: Cyclin-dependent kinases regulatory subunit (150 aa).

Low complexity predominate over residues 115 to 137 (AAAQQQQQQQQQQQQQQQQHQTQ). The interval 115-150 (AAAQQQQQQQQQQQQQQQQHQTQSISNDMQVPPQIS) is disordered.

It belongs to the CKS family. In terms of assembly, forms a stable but non-covalent complex with the CDC28 protein and with a cyclin.

Binds to the catalytic subunit of the cyclin dependent kinase (CDC28) and is essential for its biological function. The polypeptide is Cyclin-dependent kinases regulatory subunit (Saccharomyces cerevisiae (strain ATCC 204508 / S288c) (Baker's yeast)).